A 235-amino-acid chain; its full sequence is Serine protease SplA (235 aa).

The signal sequence occupies residues 1 to 35; it reads MNENVMVKGLTALTILTSLGFAENISNQPHSIAKA. Residues histidine 74, aspartate 113, and serine 189 each act as charge relay system in the active site.

The protein belongs to the peptidase S1B family.

It localises to the secreted. This is Serine protease SplA (splA) from Staphylococcus aureus (strain MSSA476).